The chain runs to 260 residues: Adenosylcobinamide-GDP ribazoletransferase (260 aa).

6 consecutive transmembrane segments (helical) span residues 40 to 60 (AFPF…LLLL), 64 to 84 (ADPL…TGAL), 117 to 137 (YGAI…AVIA), 142 to 162 (PLTA…AIAW), 188 to 208 (QFAL…AFGL), and 209 to 229 (RPLV…TAFI).

The protein belongs to the CobS family. It depends on Mg(2+) as a cofactor.

The protein localises to the cell inner membrane. It carries out the reaction alpha-ribazole + adenosylcob(III)inamide-GDP = adenosylcob(III)alamin + GMP + H(+). It catalyses the reaction alpha-ribazole 5'-phosphate + adenosylcob(III)inamide-GDP = adenosylcob(III)alamin 5'-phosphate + GMP + H(+). Its pathway is cofactor biosynthesis; adenosylcobalamin biosynthesis; adenosylcobalamin from cob(II)yrinate a,c-diamide: step 7/7. Functionally, joins adenosylcobinamide-GDP and alpha-ribazole to generate adenosylcobalamin (Ado-cobalamin). Also synthesizes adenosylcobalamin 5'-phosphate from adenosylcobinamide-GDP and alpha-ribazole 5'-phosphate. The protein is Adenosylcobinamide-GDP ribazoletransferase of Rhizobium johnstonii (strain DSM 114642 / LMG 32736 / 3841) (Rhizobium leguminosarum bv. viciae).